A 596-amino-acid chain; its full sequence is Cysteine--tRNA ligase (596 aa).

Positions 1-199 (MKSKTFLEKN…SQRYFEELRK (199 aa)) are unknown. Position 212 (Cys-212) interacts with Zn(2+). A 'HIGH' region motif is present at residues 214 to 224 (PTVYDEVHIGN). Zn(2+) is bound by residues Cys-377, His-403, and Glu-407. The 'KMSKS' region signature appears at 435 to 439 (KMSKS). Position 438 (Lys-438) interacts with ATP.

It belongs to the class-I aminoacyl-tRNA synthetase family. As to quaternary structure, monomer. Requires Zn(2+) as cofactor.

It localises to the cytoplasm. The enzyme catalyses tRNA(Cys) + L-cysteine + ATP = L-cysteinyl-tRNA(Cys) + AMP + diphosphate. This chain is Cysteine--tRNA ligase (cysS), found in Mycoplasmopsis pulmonis (strain UAB CTIP) (Mycoplasma pulmonis).